Reading from the N-terminus, the 1405-residue chain is Xanthine dehydrogenase (1405 aa).

The 2Fe-2S ferredoxin-type domain occupies 17–104 (NKLTFYVNGV…GKHLITVEGI (88 aa)). 8 residues coordinate [2Fe-2S] cluster: C56, C61, C64, C86, C125, C128, C161, and C163. The FAD-binding PCMH-type domain occupies 288–474 (FGNEQKVWFR…TKIFVPETVP (187 aa)). FAD is bound by residues 316 to 323 (IVGGASEI), F397, 407 to 411 (TPAGN), D420, I464, and K483. The Mo-molybdopterin site is built by Q833 and F864. Substrate contacts are provided by E868 and R946. R978 is a Mo-molybdopterin binding site. F980 contributes to the substrate binding site. A1147 is a Mo-molybdopterin binding site. E1333 serves as the catalytic Proton acceptor.

The protein belongs to the xanthine dehydrogenase family. As to quaternary structure, homodimer. It depends on Mo-molybdopterin as a cofactor. The cofactor is [2Fe-2S] cluster. Requires FAD as cofactor.

The protein resides in the cytoplasm. The catalysed reaction is hypoxanthine + NAD(+) + H2O = xanthine + NADH + H(+). The enzyme catalyses xanthine + NAD(+) + H2O = urate + NADH + H(+). The protein operates within purine metabolism. With respect to regulation, completely inhibited by allopurinol and significantly inhibited by adenine. Inhibited by Fe(2+), Cd(2+) and Zn(2+) and strongly inhibited by Cu(2+). Mg(2+) and Mo(2+) have no effect on activity. Key enzyme in purine degradation. Catalyzes the oxidation of hypoxanthine to xanthine. Catalyzes the oxidation of xanthine to uric acid. Oxidizes xanthine, hypoxanthine and pterine at high rates. Can also act on purine and guanine. This Blastobotrys adeninivorans (Yeast) protein is Xanthine dehydrogenase.